The chain runs to 542 residues: GMP synthase [glutamine-hydrolyzing] (542 aa).

Residues 28 to 218 (MIVILDFGSQ…VYHICECEPT (191 aa)) enclose the Glutamine amidotransferase type-1 domain. Cysteine 105 functions as the Nucleophile in the catalytic mechanism. Residues histidine 192 and glutamate 194 contribute to the active site. Positions 219-417 (WTTEAFVEEA…IGLPEEIVRR (199 aa)) constitute a GMPS ATP-PPase domain. 246–252 (SGGVDSS) serves as a coordination point for ATP.

Homodimer.

The catalysed reaction is XMP + L-glutamine + ATP + H2O = GMP + L-glutamate + AMP + diphosphate + 2 H(+). It participates in purine metabolism; GMP biosynthesis; GMP from XMP (L-Gln route): step 1/1. In terms of biological role, catalyzes the synthesis of GMP from XMP. The protein is GMP synthase [glutamine-hydrolyzing] of Gloeothece citriformis (strain PCC 7424) (Cyanothece sp. (strain PCC 7424)).